We begin with the raw amino-acid sequence, 142 residues long: Class II hydrophobin 7 (142 aa).

An N-terminal signal peptide occupies residues 1 to 16 (MKFLTVAIVLAAAASA). Intrachain disulfides connect Cys-73–Cys-123, Cys-84–Cys-114, Cys-85–Cys-97, and Cys-124–Cys-135.

This sequence belongs to the cerato-ulmin hydrophobin family. In terms of assembly, homodimer. Homodimers further self-assemble to form highly ordered films at water-air interfaces through intermolecular interactions.

It localises to the secreted. The protein localises to the cell wall. Functionally, aerial growth, conidiation, and dispersal of filamentous fungi in the environment rely upon a capability of their secreting small amphipathic proteins called hydrophobins (HPBs) with low sequence identity. Class I can self-assemble into an outermost layer of rodlet bundles on aerial cell surfaces, conferring cellular hydrophobicity that supports fungal growth, development and dispersal; whereas Class II form highly ordered films at water-air interfaces through intermolecular interactions but contribute nothing to the rodlet structure. In Trichoderma asperellum (strain ATCC 204424 / CBS 433.97 / NBRC 101777), this protein is Class II hydrophobin 7.